The sequence spans 86 residues: UPF0297 protein SERP1181 (86 aa).

Belongs to the UPF0297 family.

The protein is UPF0297 protein SERP1181 of Staphylococcus epidermidis (strain ATCC 35984 / DSM 28319 / BCRC 17069 / CCUG 31568 / BM 3577 / RP62A).